A 226-amino-acid chain; its full sequence is Phosphatidylserine decarboxylase proenzyme (226 aa).

The Schiff-base intermediate with substrate; via pyruvic acid role is filled by Ser-184. Ser-184 bears the Pyruvic acid (Ser); by autocatalysis mark.

This sequence belongs to the phosphatidylserine decarboxylase family. PSD-A subfamily. Heterodimer of a large membrane-associated beta subunit and a small pyruvoyl-containing alpha subunit. Requires pyruvate as cofactor. Is synthesized initially as an inactive proenzyme. Formation of the active enzyme involves a self-maturation process in which the active site pyruvoyl group is generated from an internal serine residue via an autocatalytic post-translational modification. Two non-identical subunits are generated from the proenzyme in this reaction, and the pyruvate is formed at the N-terminus of the alpha chain, which is derived from the carboxyl end of the proenzyme. The post-translation cleavage follows an unusual pathway, termed non-hydrolytic serinolysis, in which the side chain hydroxyl group of the serine supplies its oxygen atom to form the C-terminus of the beta chain, while the remainder of the serine residue undergoes an oxidative deamination to produce ammonia and the pyruvoyl prosthetic group on the alpha chain.

It localises to the cell membrane. It carries out the reaction a 1,2-diacyl-sn-glycero-3-phospho-L-serine + H(+) = a 1,2-diacyl-sn-glycero-3-phosphoethanolamine + CO2. It functions in the pathway phospholipid metabolism; phosphatidylethanolamine biosynthesis; phosphatidylethanolamine from CDP-diacylglycerol: step 2/2. Catalyzes the formation of phosphatidylethanolamine (PtdEtn) from phosphatidylserine (PtdSer). The protein is Phosphatidylserine decarboxylase proenzyme of Ehrlichia chaffeensis (strain ATCC CRL-10679 / Arkansas).